Consider the following 538-residue polypeptide: Beta-1-syntrophin (538 aa).

At alanine 2 the chain carries N-acetylalanine. 2 PH domains span residues 19 to 298 and 322 to 433; these read RAQR…SNVN and EIRH…QGCH. A phosphoserine mark is found at serine 87, serine 126, and serine 205. One can recognise a PDZ domain in the interval 112–195; it reads GVKVLKQELG…EVLLEVKYMR (84 aa). Residues 205–237 are disordered; that stretch reads SPVSEIGWETPPPESPRLGGSTSDPPSSQSFSF. Threonine 214 carries the phosphothreonine modification. 4 positions are modified to phosphoserine: serine 219, serine 232, serine 236, and serine 389. Positions 225 to 236 are enriched in low complexity; the sequence is STSDPPSSQSFS. Positions 482-538 constitute an SU domain; that stretch reads PYEKLKMSSDDGIRMLYLDFGGKDGEIQLDLHSCPKPIVFIIHSFLSAKITRLGLVA. Residues 518 to 538 are calmodulin-binding; sequence PIVFIIHSFLSAKITRLGLVA.

Belongs to the syntrophin family. In terms of assembly, monomer and homodimer. Interacts with the other members of the syntrophin family SNTA1 and SNTB2; with the sodium channel proteins SCN4A and SCN5A. Interacts with the viral HTLV-1 TAX protein and with dystrophin protein DMD and related proteins DTNA and UTRN. Interacts with DTNB. Phosphorylated by CaM-kinase II. Ubiquitous.

Its subcellular location is the cell membrane. The protein localises to the sarcolemma. It is found in the cell junction. It localises to the cytoplasm. The protein resides in the cytoskeleton. In terms of biological role, adapter protein that binds to and probably organizes the subcellular localization of a variety of membrane proteins. May link various receptors to the actin cytoskeleton and the dystrophin glycoprotein complex. In Homo sapiens (Human), this protein is Beta-1-syntrophin (SNTB1).